The following is a 184-amino-acid chain: MESFSSKSLALQAEKKLLSKMAGRSVAHLFIDETSSEVLDELYRVSKEYTHSRPKAQRVIKDLIKVAVKVAVLHRSGCFGPGELALATRFRQKLRQGAMTALSFGEVDFTFEAAVLAGLLVECRDILLELVEHHLTPKSHDRIRHVFDHYSDPDLLAALYGPDFTQHLGKICDGLRKLLDEGKL.

Residue Ser3 is modified to Phosphoserine.

The protein belongs to the TNFAIP8 family. TNFAIP8L2 subfamily. In terms of assembly, may interact with CASP8; however, such result is unclear since could not reproduce the interaction with CASP8. Interacts with RAC1. Post-translationally, phosphorylated by TAK1/MAP3K7; this phosphorylation triggers association with BTRC and subsequent ubiquitination and degradation. Ubiquitinated in a BTRC-depdent manner; leading to degradation mediated through the proteasome pathway. Expressed in thymus, spleen, lymph node and small intestine, but not in liver, heart, muscle, testis, spinal cord or brain. Up-regulated in the spinal cord of mice with experimental autoimmune encephalomyelitis. Constitutively expressed by macrophages, B and T-lymphocytes at various developmental stages.

The protein localises to the cytoplasm. It is found in the nucleus. Its subcellular location is the lysosome. Functionally, acts as a negative regulator of innate and adaptive immunity by maintaining immune homeostasis. Plays a regulatory role in the Toll-like signaling pathway by determining the strength of LPS-induced signaling and gene expression. Inhibits TCR-mediated T-cell activation and negatively regulate T-cell function to prevent hyperresponsiveness. Also inhibits autolysosome formation via negatively modulating MTOR activation by interacting with RAC1 and promoting the disassociation of the RAC1-MTOR complex. Plays an essential role in NK-cell biology by acting as a checkpoint and displaying an expression pattern correlating with NK-cell maturation process and by negatively regulating NK-cell maturation and antitumor immunity. Mechanistically, suppresses IL-15-triggered mTOR activity in NK-cells. In Mus musculus (Mouse), this protein is Tumor necrosis factor alpha-induced protein 8-like protein 2 (Tnfaip8l2).